The primary structure comprises 720 residues: Cyclopenase penL (720 aa).

Positions 137, 141, and 313 each coordinate Cu cation.

The protein belongs to the tyrosinase family. The cofactor is Cu(2+).

It carries out the reaction (-)-cyclopenine = viridicatin + methyl isocyanate + H(+). The enzyme catalyses (-)-4'-methoxycyclopenine = 4'-methoxyviridicatin + methyl isocyanate + H(+). It participates in secondary metabolite biosynthesis. Its pathway is alkaloid biosynthesis. The protein operates within mycotoxin biosynthesis. Cyclopenase; part of the gene cluster that mediates the biosynthesis of penigequinolones, potent insecticidal alkaloids that contain a highly modified 10-carbon prenyl group. The first stage is catalyzed by the nonribosomal peptide synthetase penN that condenses anthranilic acid and O-methyl-L-tyrosine to produce 4'-methoxycyclopeptin. 4'-methoxycyclopeptin is then converted to 4'-methoxydehydrocyclopeptin by the ketoglutarate-dependent dioxygenase penM through dehydrogenation to form a double bond between C-alpha and C-beta of the O-methyltyrosine side chain. PenM also converts its first product methoxydehydrocyclopeptin to 4'-methoxycyclopenin. The following conversion of 4'methoxycyclopenin into 4'-methoxyviridicatin is catalyzed by the cyclopenase penL. 4'-methoxyviridicatin is the precursor of quinolone natural products, and is further converted to quinolinone B. The prenyltransferase penI then catalyzes the canonical Friedel-Crafts alkylation of quinolinone B with dimethylallyl cation to yield dimethylallyl quinolone, which is subjected to FAD-dependent dehydrogenation by the FAD-linked oxidoreductase penH to yield conjugated aryl diene. The delta(3') double bond then serves as the site of the second alkylation with DMAPP catalyzed by the prenyltransferase penG to yield a carbenium ion intermediate, which can be attacked by H(2)O to yield a styrenyl quinolone containing a C3'-hydroxyprenyl chain, or undergo cyclization to yield yaequinolones J1 and J2. The conversion of the styrenyl quinolone into the tetrahydrofuran-containing yaequinolone C is performed by the FAD-dependent monooxygenase penE and involves epoxidation of the terminal C7'-C8' olefin, followed by epoxide ring opening initiated by the C3' hydroxyl group. The predicted cysteine hydrolase penJ acts as an epoxide hydrolase that enhances the rate of the 5-exo-tet cyclization step, increasing the yield of yaequinolone C. PenF catalyzes the cationic rearrangement of the epoxide formed by penE (before ring opening to produce yaequinolone C) into yaequinolone D. Finally, the short-chain dehydrogenase/reductase (SDR)-like reductase penD, catalyzes both the dehydration of yaequinolone D and the reduction of the resulting oxonium to yield penigequinolone. This Penicillium thymicola protein is Cyclopenase penL.